The sequence spans 264 residues: Synaptophysin-like protein 2 (264 aa).

Residues 1–33 (MSSTESPGRTSDKSPRQQVDRLLLGLRWQRLEE) lie on the Cytoplasmic side of the membrane. Residues 30-238 (RLEEPLGFIK…NCWFVFKETP (209 aa)) form the MARVEL domain. Residues 34–54 (PLGFIKVLQWLFAIFAFGSCG) form a helical membrane-spanning segment. Residues 55-116 (SYSGETGALV…LMGDFSAPAE (62 aa)) lie on the Vesicular side of the membrane. A helical membrane pass occupies residues 117 to 137 (FFVTLGIFSFFYTMAALVIYL). The Cytoplasmic segment spans residues 138–150 (RFHKLYTENKRFP). A helical membrane pass occupies residues 151–171 (LVDFCVTVSFTFFWLVAAAAW). Residues 172 to 213 (GKGLTDVKGATRPSSLTAAMSVCHGEEAVCSAGATPSMGLAN) lie on the Vesicular side of the membrane. N213 carries N-linked (GlcNAc...) asparagine glycosylation. A helical transmembrane segment spans residues 214–234 (LSVLFGFINFFLWAGNCWFVF). At 235–264 (KETPWHGQGQDQGQGPSQESAAEQGAVEKQ) the chain is on the cytoplasmic side. Residues 242–264 (QGQDQGQGPSQESAAEQGAVEKQ) are disordered.

This sequence belongs to the synaptophysin/synaptobrevin family. As to expression, expressed abundantly in skeletal muscle and at lower levels in the kidney.

The protein localises to the membrane. Involved in communication between the T-tubular and junctional sarcoplasmic reticulum (SR) membranes. The chain is Synaptophysin-like protein 2 (Sypl2) from Mus musculus (Mouse).